Here is a 190-residue protein sequence, read N- to C-terminus: Protein FAM210B, mitochondrial (190 aa).

The N-terminal 58 residues, 1 to 58 (MAGLLTLLGPAGRVSTRLRPLAPWLLGTATSCAPPLWALALSHPVPDARLLRTARGDC), are a transit peptide targeting the mitochondrion. The segment covering 56-66 (GDCLSRQEPNR) has biased composition (basic and acidic residues). A disordered region spans residues 56-81 (GDCLSRQEPNRTPEPGGSVTGTEKKL). A DUF1279 domain is found at 78-189 (EKKLSRTQQL…VGLFKPPATK (112 aa)). 2 consecutive transmembrane segments (helical) span residues 97 to 117 (VGVSMHIGISLVSLGIFYTVV) and 148 to 168 (FVVAYAIHKLFAPVRISITLV).

The protein belongs to the FAM210 family. In terms of tissue distribution, expressed in late erythroblast differentiation stages.

The protein localises to the mitochondrion. It is found in the mitochondrion outer membrane. Functionally, plays a role in erythroid differentiation. Involved in cell proliferation and tumor cell growth suppression. Involved in the metabolic reprogramming of cancer cells in a PDK4-dependent manner. In Mus musculus (Mouse), this protein is Protein FAM210B, mitochondrial.